We begin with the raw amino-acid sequence, 249 residues long: NADH dehydrogenase [ubiquinone] flavoprotein 2, mitochondrial (249 aa).

The N-terminal 32 residues, 1-32 (MFLSAALRARAAGLAAHWGKHIRNLHKTAVQN), are a transit peptide targeting the mitochondrion. Lys-61 is modified (N6-acetyllysine). Cys-135, Cys-140, Cys-176, and Cys-180 together coordinate [2Fe-2S] cluster. The residue at position 193 (Tyr-193) is a Phosphotyrosine; by SRC. Positions 213–249 (IPKPGPRSGRFSCEPAGGLTSLTEPPKGPGFGVQAGL) are disordered.

The protein belongs to the complex I 24 kDa subunit family. As to quaternary structure, core subunit of respiratory chain NADH dehydrogenase (Complex I) which is composed of 45 different subunits. This is a component of the flavoprotein-sulfur (FP) fragment of the enzyme. [2Fe-2S] cluster serves as cofactor.

It localises to the mitochondrion inner membrane. The enzyme catalyses a ubiquinone + NADH + 5 H(+)(in) = a ubiquinol + NAD(+) + 4 H(+)(out). Core subunit of the mitochondrial membrane respiratory chain NADH dehydrogenase (Complex I) which catalyzes electron transfer from NADH through the respiratory chain, using ubiquinone as an electron acceptor. Parts of the peripheral arm of the enzyme, where the electrons from NADH are accepted by flavin mononucleotide (FMN) and then passed along a chain of iron-sulfur clusters by electron tunnelling to the final acceptor ubiquinone. Contains one iron-sulfur cluster. In Bos taurus (Bovine), this protein is NADH dehydrogenase [ubiquinone] flavoprotein 2, mitochondrial (NDUFV2).